A 105-amino-acid chain; its full sequence is Pyrimidine/purine nucleoside phosphorylase (105 aa).

It belongs to the nucleoside phosphorylase PpnP family.

The catalysed reaction is a purine D-ribonucleoside + phosphate = a purine nucleobase + alpha-D-ribose 1-phosphate. The enzyme catalyses adenosine + phosphate = alpha-D-ribose 1-phosphate + adenine. It carries out the reaction cytidine + phosphate = cytosine + alpha-D-ribose 1-phosphate. It catalyses the reaction guanosine + phosphate = alpha-D-ribose 1-phosphate + guanine. The catalysed reaction is inosine + phosphate = alpha-D-ribose 1-phosphate + hypoxanthine. The enzyme catalyses thymidine + phosphate = 2-deoxy-alpha-D-ribose 1-phosphate + thymine. It carries out the reaction uridine + phosphate = alpha-D-ribose 1-phosphate + uracil. It catalyses the reaction xanthosine + phosphate = alpha-D-ribose 1-phosphate + xanthine. Its function is as follows. Catalyzes the phosphorolysis of diverse nucleosides, yielding D-ribose 1-phosphate and the respective free bases. Can use uridine, adenosine, guanosine, cytidine, thymidine, inosine and xanthosine as substrates. Also catalyzes the reverse reactions. The chain is Pyrimidine/purine nucleoside phosphorylase from Cupriavidus taiwanensis (strain DSM 17343 / BCRC 17206 / CCUG 44338 / CIP 107171 / LMG 19424 / R1) (Ralstonia taiwanensis (strain LMG 19424)).